Consider the following 194-residue polypeptide: Protein GrpE (194 aa).

The interval 1 to 39 (MTNHEQDQQDNSELLDDDQVTLESQQAADSGAEAPASDD) is disordered. A compositionally biased stretch (acidic residues) spans 8 to 20 (QQDNSELLDDDQV).

It belongs to the GrpE family. As to quaternary structure, homodimer.

Its subcellular location is the cytoplasm. Participates actively in the response to hyperosmotic and heat shock by preventing the aggregation of stress-denatured proteins, in association with DnaK and GrpE. It is the nucleotide exchange factor for DnaK and may function as a thermosensor. Unfolded proteins bind initially to DnaJ; upon interaction with the DnaJ-bound protein, DnaK hydrolyzes its bound ATP, resulting in the formation of a stable complex. GrpE releases ADP from DnaK; ATP binding to DnaK triggers the release of the substrate protein, thus completing the reaction cycle. Several rounds of ATP-dependent interactions between DnaJ, DnaK and GrpE are required for fully efficient folding. The chain is Protein GrpE from Saccharophagus degradans (strain 2-40 / ATCC 43961 / DSM 17024).